The chain runs to 229 residues: Cytochrome c oxidase subunit 2 (229 aa).

The Mitochondrial intermembrane portion of the chain corresponds to Met1–Ser14. A helical transmembrane segment spans residues Pro15–Thr45. Residues Ser46–Gln59 are Mitochondrial matrix-facing. A helical transmembrane segment spans residues Glu60–Met87. Over Asp88–Leu229 the chain is Mitochondrial intermembrane. Residues His162, Cys197, Glu199, Cys201, His205, and Met208 each contribute to the Cu cation site. Residue Glu199 coordinates Mg(2+).

It belongs to the cytochrome c oxidase subunit 2 family. Component of the cytochrome c oxidase (complex IV, CIV), a multisubunit enzyme composed of 14 subunits. The complex is composed of a catalytic core of 3 subunits MT-CO1, MT-CO2 and MT-CO3, encoded in the mitochondrial DNA, and 11 supernumerary subunits COX4I, COX5A, COX5B, COX6A, COX6B, COX6C, COX7A, COX7B, COX7C, COX8 and NDUFA4, which are encoded in the nuclear genome. The complex exists as a monomer or a dimer and forms supercomplexes (SCs) in the inner mitochondrial membrane with NADH-ubiquinone oxidoreductase (complex I, CI) and ubiquinol-cytochrome c oxidoreductase (cytochrome b-c1 complex, complex III, CIII), resulting in different assemblies (supercomplex SCI(1)III(2)IV(1) and megacomplex MCI(2)III(2)IV(2)). Found in a complex with TMEM177, COA6, COX18, COX20, SCO1 and SCO2. Interacts with TMEM177 in a COX20-dependent manner. Interacts with COX20. Interacts with COX16. Cu cation serves as cofactor.

The protein localises to the mitochondrion inner membrane. The enzyme catalyses 4 Fe(II)-[cytochrome c] + O2 + 8 H(+)(in) = 4 Fe(III)-[cytochrome c] + 2 H2O + 4 H(+)(out). Functionally, component of the cytochrome c oxidase, the last enzyme in the mitochondrial electron transport chain which drives oxidative phosphorylation. The respiratory chain contains 3 multisubunit complexes succinate dehydrogenase (complex II, CII), ubiquinol-cytochrome c oxidoreductase (cytochrome b-c1 complex, complex III, CIII) and cytochrome c oxidase (complex IV, CIV), that cooperate to transfer electrons derived from NADH and succinate to molecular oxygen, creating an electrochemical gradient over the inner membrane that drives transmembrane transport and the ATP synthase. Cytochrome c oxidase is the component of the respiratory chain that catalyzes the reduction of oxygen to water. Electrons originating from reduced cytochrome c in the intermembrane space (IMS) are transferred via the dinuclear copper A center (CU(A)) of subunit 2 and heme A of subunit 1 to the active site in subunit 1, a binuclear center (BNC) formed by heme A3 and copper B (CU(B)). The BNC reduces molecular oxygen to 2 water molecules using 4 electrons from cytochrome c in the IMS and 4 protons from the mitochondrial matrix. This is Cytochrome c oxidase subunit 2 (MT-CO2) from Myxine glutinosa (Atlantic hagfish).